Consider the following 265-residue polypeptide: Orotidine 5'-phosphate decarboxylase (265 aa).

Residues D37, 59 to 61 (KTH), 91 to 100 (DRKFADIGNT), Y217, and R236 contribute to the substrate site. Catalysis depends on K93, which acts as the Proton donor.

It belongs to the OMP decarboxylase family.

It carries out the reaction orotidine 5'-phosphate + H(+) = UMP + CO2. Its pathway is pyrimidine metabolism; UMP biosynthesis via de novo pathway; UMP from orotate: step 2/2. This Saccharomycopsis fibuligera (Yeast) protein is Orotidine 5'-phosphate decarboxylase (URA3).